A 224-amino-acid chain; its full sequence is UPF0758 protein mma_2551 (224 aa).

Residues 102–224 (SLNSPQAVKK…VYSFAEHGHL (123 aa)) enclose the MPN domain. The Zn(2+) site is built by H173, H175, and D186. Residues 173 to 186 (HNHPSGSSEPSAAD) carry the JAMM motif motif.

This sequence belongs to the UPF0758 family.

The polypeptide is UPF0758 protein mma_2551 (Janthinobacterium sp. (strain Marseille) (Minibacterium massiliensis)).